Consider the following 476-residue polypeptide: Bifunctional protein HldE (476 aa).

The ribokinase stretch occupies residues 1–318; that stretch reads MKPTLPNYDQ…AEAIHGSQDS (318 aa). 195–198 is a binding site for ATP; the sequence is NMLE. Aspartate 264 is a catalytic residue. A cytidylyltransferase region spans residues 344–476; that stretch reads MTNGCFDILH…IIEAIKGGRG (133 aa).

This sequence in the N-terminal section; belongs to the carbohydrate kinase PfkB family. It in the C-terminal section; belongs to the cytidylyltransferase family. In terms of assembly, homodimer.

The catalysed reaction is D-glycero-beta-D-manno-heptose 7-phosphate + ATP = D-glycero-beta-D-manno-heptose 1,7-bisphosphate + ADP + H(+). It catalyses the reaction D-glycero-beta-D-manno-heptose 1-phosphate + ATP + H(+) = ADP-D-glycero-beta-D-manno-heptose + diphosphate. The protein operates within nucleotide-sugar biosynthesis; ADP-L-glycero-beta-D-manno-heptose biosynthesis; ADP-L-glycero-beta-D-manno-heptose from D-glycero-beta-D-manno-heptose 7-phosphate: step 1/4. Its pathway is nucleotide-sugar biosynthesis; ADP-L-glycero-beta-D-manno-heptose biosynthesis; ADP-L-glycero-beta-D-manno-heptose from D-glycero-beta-D-manno-heptose 7-phosphate: step 3/4. Its function is as follows. Catalyzes the phosphorylation of D-glycero-D-manno-heptose 7-phosphate at the C-1 position to selectively form D-glycero-beta-D-manno-heptose-1,7-bisphosphate. Catalyzes the ADP transfer from ATP to D-glycero-beta-D-manno-heptose 1-phosphate, yielding ADP-D-glycero-beta-D-manno-heptose. The polypeptide is Bifunctional protein HldE (Aliivibrio salmonicida (strain LFI1238) (Vibrio salmonicida (strain LFI1238))).